The following is a 165-amino-acid chain: 3-isopropylmalate dehydratase small subunit (165 aa).

The protein belongs to the LeuD family. LeuD type 2 subfamily. In terms of assembly, heterodimer of LeuC and LeuD.

The catalysed reaction is (2R,3S)-3-isopropylmalate = (2S)-2-isopropylmalate. It participates in amino-acid biosynthesis; L-leucine biosynthesis; L-leucine from 3-methyl-2-oxobutanoate: step 2/4. Functionally, catalyzes the isomerization between 2-isopropylmalate and 3-isopropylmalate, via the formation of 2-isopropylmaleate. This Hydrogenobaculum sp. (strain Y04AAS1) protein is 3-isopropylmalate dehydratase small subunit.